The sequence spans 403 residues: L-lactate oxidase (403 aa).

One can recognise an FMN hydroxy acid dehydrogenase domain in the interval 21-375 (EGSVDFVNVF…KHFKLRHNPY (355 aa)). Tyr-47 is a binding site for pyruvate. FMN is bound by residues 99–101 (PVA), Ser-128, and Gln-150. Tyr-152 serves as a coordination point for pyruvate. Residue Thr-178 coordinates FMN. 2 residues coordinate pyruvate: Arg-187 and Tyr-220. Lys-246 provides a ligand contact to FMN. Pyruvate is bound by residues His-270 and Arg-273. The Proton acceptor role is filled by His-270. Residues 301–305 (DSGVR) and Arg-325 contribute to the FMN site.

It belongs to the FMN-dependent alpha-hydroxy acid dehydrogenase family. Homotetramer. It depends on FMN as a cofactor.

The enzyme catalyses (S)-lactate + O2 = pyruvate + H2O2. Catalyzes the oxidation of (S)-lactate (L-lactate) to pyruvate, with a reduction of O2 to H2O2. Is likely involved in the L-lactate aerobic metabolism of S.iniae that enables the bacterium to utilize L-lactate as an energy source for growth under aerobic conditions in the absence (or at low concentrations) of glucose. This Streptococcus iniae (Streptococcus shiloi) protein is L-lactate oxidase.